The following is a 266-amino-acid chain: MEVANATQQKHFVLVHGAGHGAWCWYKLKSLLESSRHKVTAIDLATSGVNPKRLDEVDTLQDYCLPLLELMAAIPQDDKVIVVGHSYGGFCIALAMDLYPKKISIGVFIGSIMPDSTHPPIYFFNQYYEWNPDGDDSPDTKVETYGCPDQPRTVIHFGPIYLSTKLYQNCTSEEIELAKVLVRPVTLFSEDLSKLKAFSEEGYGSVKRGYIICSEDKAFPVGLQHWLVDNVGVSEVKEIKGADHMPMISKPQELCQCLVEIAEKVV.

Residues 11 to 121 (HFVLVHGAGH…IMPDSTHPPI (111 aa)) enclose the AB hydrolase-1 domain. Active-site residues include S86, D216, and H244.

The protein belongs to the AB hydrolase superfamily. As to quaternary structure, homodimer. As to expression, mainly expressed in roots.

The catalysed reaction is 17-dehydropreakuammicine + H2O = norfluorocurarine + methanol + CO2. Its pathway is alkaloid biosynthesis. Its function is as follows. Hydrolase involved in the biosynthesis of curare monoterpene indole alkaloids (MIAs), natural products such as strychnine, a neurotoxic compound used as a pesticide to control rodents, and its pharmacologically active derivatives, including brucine, used to regulate blood pressure. Curare alkaloids act as animal glycine receptor antagonists. Catalyzes the conversion of dehydropreakuammicine to norfluorocurarine. The polypeptide is Norfluorocurarine synthase 2 (Strychnos nux-vomica (Poison nut)).